An 87-amino-acid chain; its full sequence is Phosphoribosyl-ATP pyrophosphatase (87 aa).

The protein belongs to the PRA-PH family.

The protein localises to the cytoplasm. The catalysed reaction is 1-(5-phospho-beta-D-ribosyl)-ATP + H2O = 1-(5-phospho-beta-D-ribosyl)-5'-AMP + diphosphate + H(+). Its pathway is amino-acid biosynthesis; L-histidine biosynthesis; L-histidine from 5-phospho-alpha-D-ribose 1-diphosphate: step 2/9. The sequence is that of Phosphoribosyl-ATP pyrophosphatase from Bifidobacterium adolescentis (strain ATCC 15703 / DSM 20083 / NCTC 11814 / E194a).